A 176-amino-acid polypeptide reads, in one-letter code: Peroxynitrite isomerase 1 (176 aa).

The tract at residues 1–23 is disordered; sequence MDENSTLSPAHSDAAASSSANTP. The span at 8-20 shows a compositional bias: low complexity; it reads SPAHSDAAASSSA. Positions 37–43 match the GXWXGXG motif; that stretch reads GLWRGEG. A heme b-binding site is contributed by H168.

This sequence belongs to the nitrobindin family. Homodimer. Heme b serves as cofactor.

The catalysed reaction is peroxynitrite = nitrate. It participates in nitrogen metabolism. Functionally, heme-binding protein able to scavenge peroxynitrite and to protect free L-tyrosine against peroxynitrite-mediated nitration, by acting as a peroxynitrite isomerase that converts peroxynitrite to nitrate. Therefore, this protein likely plays a role in peroxynitrite sensing and in the detoxification of reactive nitrogen and oxygen species (RNS and ROS, respectively). Is able to bind nitric oxide (NO) in vitro, but may act as a sensor of peroxynitrite levels in vivo. This chain is Peroxynitrite isomerase 1, found in Rhodococcus jostii (strain RHA1).